A 99-amino-acid chain; its full sequence is CLAVATA3/ESR (CLE)-related protein 11 (99 aa).

The first 31 residues, 1 to 31 (MTKQPKPCSFLFHISLLSALFVFLLISFAFT), serve as a signal peptide directing secretion. Hydroxyproline is present on residues Pro91 and Pro94. Residue Pro94 is glycosylated (O-linked (Ara...) hydroxyproline).

It belongs to the CLV3/ESR signal peptide family. In terms of processing, the O-glycosylation (arabinosylation) of the hydroxyproline Pro-94 enhances binding affinity of the CLE11p peptide for its receptor. As to expression, mostly expressed in seedlings, roots and siliques, and, to a lower extent, in leaves, flowers, stems and apex.

It localises to the secreted. The protein localises to the extracellular space. In terms of biological role, extracellular signal peptide that regulates cell fate. Represses root apical meristem maintenance. Regulates the transition of protophloem cells from proliferation to differentiation, thus impinging on postembryonic growth capacity of the root meristem; this signaling pathway requires CRN and CLV2. The protein is CLAVATA3/ESR (CLE)-related protein 11 of Arabidopsis thaliana (Mouse-ear cress).